Reading from the N-terminus, the 147-residue chain is 3-dehydroquinate dehydratase (147 aa).

The Proton acceptor role is filled by tyrosine 24. Substrate contacts are provided by asparagine 75, histidine 81, and aspartate 88. Histidine 101 serves as the catalytic Proton donor. Substrate-binding positions include leucine 102–serine 103 and arginine 112.

It belongs to the type-II 3-dehydroquinase family. As to quaternary structure, homododecamer.

The enzyme catalyses 3-dehydroquinate = 3-dehydroshikimate + H2O. It functions in the pathway metabolic intermediate biosynthesis; chorismate biosynthesis; chorismate from D-erythrose 4-phosphate and phosphoenolpyruvate: step 3/7. Catalyzes a trans-dehydration via an enolate intermediate. The sequence is that of 3-dehydroquinate dehydratase from Caulobacter sp. (strain K31).